Here is a 286-residue protein sequence, read N- to C-terminus: Beta-lactamase SHV-29 (286 aa).

Positions 1 to 21 are cleaved as a signal peptide; that stretch reads MRYIRLCIISLLATLPLAVHA. Catalysis depends on serine 66, which acts as the Acyl-ester intermediate. Cysteines 73 and 119 form a disulfide. Residue glutamate 164 is the Proton acceptor of the active site. Position 230–232 (230–232) interacts with substrate; sequence KTG.

Belongs to the class-A beta-lactamase family.

It catalyses the reaction a beta-lactam + H2O = a substituted beta-amino acid. The polypeptide is Beta-lactamase SHV-29 (bla) (Klebsiella pneumoniae).